A 215-amino-acid polypeptide reads, in one-letter code: Probable peptidyl-prolyl cis-trans isomerase (215 aa).

The 160-residue stretch at 38-197 folds into the PPIase cyclophilin-type domain; that stretch reads DGIYAVMETN…RRGAAAKRFV (160 aa).

This sequence belongs to the cyclophilin-type PPIase family.

It catalyses the reaction [protein]-peptidylproline (omega=180) = [protein]-peptidylproline (omega=0). In terms of biological role, PPIases accelerate the folding of proteins. It catalyzes the cis-trans isomerization of proline imidic peptide bonds in oligopeptides. The polypeptide is Probable peptidyl-prolyl cis-trans isomerase (ppiB) (Treponema pallidum (strain Nichols)).